We begin with the raw amino-acid sequence, 336 residues long: Pyridoxal 5'-phosphate synthase subunit PdxS (336 aa).

Asp30 is a D-ribose 5-phosphate binding site. Lys87 (schiff-base intermediate with D-ribose 5-phosphate) is an active-site residue. Gly159 serves as a coordination point for D-ribose 5-phosphate. Residue Arg171 coordinates D-glyceraldehyde 3-phosphate. D-ribose 5-phosphate is bound by residues Gly257 and Gly278–Ser279.

It belongs to the PdxS/SNZ family. As to quaternary structure, in the presence of PdxT, forms a dodecamer of heterodimers.

The catalysed reaction is aldehydo-D-ribose 5-phosphate + D-glyceraldehyde 3-phosphate + L-glutamine = pyridoxal 5'-phosphate + L-glutamate + phosphate + 3 H2O + H(+). Its pathway is cofactor biosynthesis; pyridoxal 5'-phosphate biosynthesis. Its function is as follows. Catalyzes the formation of pyridoxal 5'-phosphate from ribose 5-phosphate (RBP), glyceraldehyde 3-phosphate (G3P) and ammonia. The ammonia is provided by the PdxT subunit. Can also use ribulose 5-phosphate and dihydroxyacetone phosphate as substrates, resulting from enzyme-catalyzed isomerization of RBP and G3P, respectively. This is Pyridoxal 5'-phosphate synthase subunit PdxS from Thermoplasma acidophilum (strain ATCC 25905 / DSM 1728 / JCM 9062 / NBRC 15155 / AMRC-C165).